Here is a 264-residue protein sequence, read N- to C-terminus: Probable pectate lyase D (264 aa).

An N-terminal signal peptide occupies residues methionine 1–alanine 17. A glycan (N-linked (GlcNAc...) asparagine) is linked at asparagine 60. The disordered stretch occupies residues tyrosine 234–cysteine 264. A compositionally biased stretch (acidic residues) spans glutamate 235 to glutamine 245. The segment covering glutamate 246 to glutamine 256 has biased composition (polar residues).

It belongs to the polysaccharide lyase 3 family. Ca(2+) is required as a cofactor.

It localises to the secreted. The catalysed reaction is Eliminative cleavage of (1-&gt;4)-alpha-D-galacturonan to give oligosaccharides with 4-deoxy-alpha-D-galact-4-enuronosyl groups at their non-reducing ends.. Its function is as follows. Pectinolytic enzyme consist of four classes of enzymes: pectin lyase, polygalacturonase, pectin methylesterase and rhamnogalacturonase. Among pectinolytic enzymes, pectin lyase is the most important in depolymerization of pectin, since it cleaves internal glycosidic bonds of highly methylated pectins. Favors pectate, the anion, over pectin, the methyl ester. The sequence is that of Probable pectate lyase D (plyD) from Emericella nidulans (strain FGSC A4 / ATCC 38163 / CBS 112.46 / NRRL 194 / M139) (Aspergillus nidulans).